The following is a 290-amino-acid chain: Undecaprenyl-diphosphatase (290 aa).

A run of 8 helical transmembrane segments spans residues 5–25 (IGIF…YFPI), 44–64 (GTAY…TYFY), 88–108 (VRLF…GLAL), 122–142 (LSVI…SESL), 152–172 (IRVI…VPGV), 195–215 (FSFL…LKVL), 226–246 (PIVA…AWLL), and 255–275 (LVFV…LAAG).

It belongs to the UppP family.

The protein localises to the cell inner membrane. It catalyses the reaction di-trans,octa-cis-undecaprenyl diphosphate + H2O = di-trans,octa-cis-undecaprenyl phosphate + phosphate + H(+). Catalyzes the dephosphorylation of undecaprenyl diphosphate (UPP). Confers resistance to bacitracin. The polypeptide is Undecaprenyl-diphosphatase (Gloeobacter violaceus (strain ATCC 29082 / PCC 7421)).